A 229-amino-acid chain; its full sequence is Uracil-DNA glycosylase (229 aa).

The Proton acceptor role is filled by aspartate 70.

It belongs to the uracil-DNA glycosylase (UDG) superfamily. UNG family.

It is found in the cytoplasm. The enzyme catalyses Hydrolyzes single-stranded DNA or mismatched double-stranded DNA and polynucleotides, releasing free uracil.. Excises uracil residues from the DNA which can arise as a result of misincorporation of dUMP residues by DNA polymerase or due to deamination of cytosine. The sequence is that of Uracil-DNA glycosylase from Chlamydia trachomatis serovar A (strain ATCC VR-571B / DSM 19440 / HAR-13).